Reading from the N-terminus, the 155-residue chain is Protein FAM162B (155 aa).

Residues 95–114 form a helical membrane-spanning segment; that stretch reads VKACYIMMGLTIFACLVMIV.

It belongs to the UPF0389 family.

It is found in the membrane. This is Protein FAM162B (fam162b) from Danio rerio (Zebrafish).